Here is a 109-residue protein sequence, read N- to C-terminus: Cytochrome c-550 (109 aa).

Heme c is bound by residues C13, C16, H17, and M79.

In terms of processing, binds 1 heme c group covalently per subunit.

The polypeptide is Cytochrome c-550 (Nitrobacter winogradskyi (Nitrobacter agilis)).